A 242-amino-acid chain; its full sequence is ATP-dependent dethiobiotin synthetase BioD (242 aa).

Glutamate 12–valine 17 is an ATP binding site. Threonine 16 provides a ligand contact to Mg(2+). Lysine 37 is a catalytic residue. Position 41 (serine 41) interacts with substrate. ATP-binding positions include aspartate 51 and glutamate 112 to glycine 115. Mg(2+) is bound by residues aspartate 51 and glutamate 112.

It belongs to the dethiobiotin synthetase family. Homodimer. The cofactor is Mg(2+).

It localises to the cytoplasm. It carries out the reaction (7R,8S)-7,8-diammoniononanoate + CO2 + ATP = (4R,5S)-dethiobiotin + ADP + phosphate + 3 H(+). The protein operates within cofactor biosynthesis; biotin biosynthesis; biotin from 7,8-diaminononanoate: step 1/2. In terms of biological role, catalyzes a mechanistically unusual reaction, the ATP-dependent insertion of CO2 between the N7 and N8 nitrogen atoms of 7,8-diaminopelargonic acid (DAPA, also called 7,8-diammoniononanoate) to form a ureido ring. In Bacillus thuringiensis subsp. konkukian (strain 97-27), this protein is ATP-dependent dethiobiotin synthetase BioD.